The primary structure comprises 873 residues: Bifunctional uridylyltransferase/uridylyl-removing enzyme (873 aa).

The segment at 1-332 (MPYQCPITFN…NGGQTQEAEI (332 aa)) is uridylyltransferase. The interval 333 to 692 (LDNDFQRRGS…ISKKATRGGT (360 aa)) is uridylyl-removing. The 123-residue stretch at 451–573 (VDEHSIRLLK…VRDEESLELL (123 aa)) folds into the HD domain. 2 consecutive ACT domains span residues 693–777 (EVFV…RTPR) and 800–873 (LMEL…ELAP).

This sequence belongs to the GlnD family. Requires Mg(2+) as cofactor.

The catalysed reaction is [protein-PII]-L-tyrosine + UTP = [protein-PII]-uridylyl-L-tyrosine + diphosphate. It carries out the reaction [protein-PII]-uridylyl-L-tyrosine + H2O = [protein-PII]-L-tyrosine + UMP + H(+). With respect to regulation, uridylyltransferase (UTase) activity is inhibited by glutamine, while glutamine activates uridylyl-removing (UR) activity. Modifies, by uridylylation and deuridylylation, the PII regulatory proteins (GlnB and homologs), in response to the nitrogen status of the cell that GlnD senses through the glutamine level. Under low glutamine levels, catalyzes the conversion of the PII proteins and UTP to PII-UMP and PPi, while under higher glutamine levels, GlnD hydrolyzes PII-UMP to PII and UMP (deuridylylation). Thus, controls uridylylation state and activity of the PII proteins, and plays an important role in the regulation of nitrogen assimilation and metabolism. The polypeptide is Bifunctional uridylyltransferase/uridylyl-removing enzyme (Vibrio atlanticus (strain LGP32) (Vibrio splendidus (strain Mel32))).